Consider the following 476-residue polypeptide: Bifunctional protein HldE (476 aa).

The segment at 1 to 319 (MKISLPAFEK…AALNLSHGES (319 aa)) is ribokinase. 195–198 (NMSE) serves as a coordination point for ATP. Residue D264 is part of the active site. The cytidylyltransferase stretch occupies residues 345–476 (MTNGCFDILH…AIIENIMAKQ (132 aa)).

The protein in the N-terminal section; belongs to the carbohydrate kinase PfkB family. In the C-terminal section; belongs to the cytidylyltransferase family. Homodimer.

It carries out the reaction D-glycero-beta-D-manno-heptose 7-phosphate + ATP = D-glycero-beta-D-manno-heptose 1,7-bisphosphate + ADP + H(+). The catalysed reaction is D-glycero-beta-D-manno-heptose 1-phosphate + ATP + H(+) = ADP-D-glycero-beta-D-manno-heptose + diphosphate. It participates in nucleotide-sugar biosynthesis; ADP-L-glycero-beta-D-manno-heptose biosynthesis; ADP-L-glycero-beta-D-manno-heptose from D-glycero-beta-D-manno-heptose 7-phosphate: step 1/4. It functions in the pathway nucleotide-sugar biosynthesis; ADP-L-glycero-beta-D-manno-heptose biosynthesis; ADP-L-glycero-beta-D-manno-heptose from D-glycero-beta-D-manno-heptose 7-phosphate: step 3/4. Functionally, catalyzes the phosphorylation of D-glycero-D-manno-heptose 7-phosphate at the C-1 position to selectively form D-glycero-beta-D-manno-heptose-1,7-bisphosphate. In terms of biological role, catalyzes the ADP transfer from ATP to D-glycero-beta-D-manno-heptose 1-phosphate, yielding ADP-D-glycero-beta-D-manno-heptose. In Shewanella loihica (strain ATCC BAA-1088 / PV-4), this protein is Bifunctional protein HldE.